We begin with the raw amino-acid sequence, 299 residues long: 4-hydroxy-tetrahydrodipicolinate synthase (299 aa).

Pyruvate is bound at residue T44. The active-site Proton donor/acceptor is the Y133. The active-site Schiff-base intermediate with substrate is K162. Residue I204 coordinates pyruvate.

The protein belongs to the DapA family. As to quaternary structure, homotetramer; dimer of dimers.

The protein resides in the cytoplasm. It catalyses the reaction L-aspartate 4-semialdehyde + pyruvate = (2S,4S)-4-hydroxy-2,3,4,5-tetrahydrodipicolinate + H2O + H(+). It functions in the pathway amino-acid biosynthesis; L-lysine biosynthesis via DAP pathway; (S)-tetrahydrodipicolinate from L-aspartate: step 3/4. Catalyzes the condensation of (S)-aspartate-beta-semialdehyde [(S)-ASA] and pyruvate to 4-hydroxy-tetrahydrodipicolinate (HTPA). The sequence is that of 4-hydroxy-tetrahydrodipicolinate synthase from Thermus thermophilus (strain ATCC 27634 / DSM 579 / HB8).